We begin with the raw amino-acid sequence, 128 residues long: Ribonuclease P protein component 4 (128 aa).

Cys63, Cys66, Cys92, and Cys95 together coordinate Zn(2+).

The protein belongs to the eukaryotic/archaeal RNase P protein component 4 family. Consists of a catalytic RNA component and at least 4 protein subunits. Forms a subcomplex with Rnp1 which stimulates the catalytic RNA. It depends on Zn(2+) as a cofactor.

It is found in the cytoplasm. The catalysed reaction is Endonucleolytic cleavage of RNA, removing 5'-extranucleotides from tRNA precursor.. Functionally, part of ribonuclease P, a protein complex that generates mature tRNA molecules by cleaving their 5'-ends. This Methanocaldococcus jannaschii (strain ATCC 43067 / DSM 2661 / JAL-1 / JCM 10045 / NBRC 100440) (Methanococcus jannaschii) protein is Ribonuclease P protein component 4.